Consider the following 344-residue polypeptide: Putative voltage-gated potassium channel subunit beta (344 aa).

Residues W33, D62, Y67, S167, Q193, W222, S223, P224, L225, K233, R243, G301, S303, Q307, E310, and N311 each contribute to the NADP(+) site. Y67 acts as the Proton donor/acceptor in catalysis.

The protein belongs to the shaker potassium channel beta subunit family. As to quaternary structure, forms heteromultimeric complexes with potassium channel alpha subunits.

It localises to the cytoplasm. Its subcellular location is the nucleus. Probable accessory potassium channel protein which modulates the activity of the pore-forming alpha subunit. This chain is Putative voltage-gated potassium channel subunit beta, found in Schizosaccharomyces pombe (strain 972 / ATCC 24843) (Fission yeast).